Reading from the N-terminus, the 246-residue chain is MIELGVNIDHVATLRQQRHTVYPDPVQAALRAEDAGADLITLHLREDRRHILDADVHAIRPLLRTRMNLECAITPEMLDIACAVRPSDVCLVPEKRTELTTEGGLEVAGALDAVRDAVARLHDAGIRVSLFIDPDIAQIQAAAQAGATVIELHTGAYAEAPDGQAGPELDRLRAALAEGLRHGMRVNAGHGLHYGNVAPIAALDGIAELNIGHAIVAQAVFDGWEKAVRDMKALMVQARQQALRGR.

3-amino-2-oxopropyl phosphate is bound at residue N7. Residue 9–10 coordinates 1-deoxy-D-xylulose 5-phosphate; the sequence is DH. Residue R18 coordinates 3-amino-2-oxopropyl phosphate. The active-site Proton acceptor is the H43. Positions 45 and 50 each coordinate 1-deoxy-D-xylulose 5-phosphate. The Proton acceptor role is filled by E70. 1-deoxy-D-xylulose 5-phosphate is bound at residue T100. H190 functions as the Proton donor in the catalytic mechanism. Residues G191 and 212-213 each bind 3-amino-2-oxopropyl phosphate; that span reads GH.

The protein belongs to the PNP synthase family. In terms of assembly, homooctamer; tetramer of dimers.

It is found in the cytoplasm. The enzyme catalyses 3-amino-2-oxopropyl phosphate + 1-deoxy-D-xylulose 5-phosphate = pyridoxine 5'-phosphate + phosphate + 2 H2O + H(+). Its pathway is cofactor biosynthesis; pyridoxine 5'-phosphate biosynthesis; pyridoxine 5'-phosphate from D-erythrose 4-phosphate: step 5/5. Its function is as follows. Catalyzes the complicated ring closure reaction between the two acyclic compounds 1-deoxy-D-xylulose-5-phosphate (DXP) and 3-amino-2-oxopropyl phosphate (1-amino-acetone-3-phosphate or AAP) to form pyridoxine 5'-phosphate (PNP) and inorganic phosphate. This chain is Pyridoxine 5'-phosphate synthase, found in Bordetella petrii (strain ATCC BAA-461 / DSM 12804 / CCUG 43448).